A 345-amino-acid polypeptide reads, in one-letter code: Protein GAMETE CELL DEFECTIVE 1, mitochondrial (345 aa).

The N-terminal 43 residues, 1 to 43 (MLALRKTLLHGRLPAAPPAAAAAAIASRIPALLRRLSSSPGDG), are a transit peptide targeting the mitochondrion. Positions 36-81 (LSSSPGDGQGGDEWGSSWSTGITKEHFDGSDAAVGRPVTSPSKPVS) are disordered.

In terms of tissue distribution, expressed in roots, stems, leaves and florets.

It is found in the mitochondrion. Essential for fertility (male and female gametophyte functions and development). Required for the integrity of female gametic mitochondria. Involved in embryo apical-basal patterning, and particularly dorsal-ventral patterning, during early embryogenesis, and endosperm free nucleus positioning and development as well as early endosperm development, probably by modulating the expression pattern of related genes (e.g. AL1, MYB3/AL2, CYP78A13/GE, PNH1, HAZ1, MPK6 and OSH1). Has function in triggering of endosperm programmed cell death (PCD) leading to syncytial endosperm cellularization and starchy endosperm cell maturation. Implicated in central vacuole dynamics necessary for microspore development leading to pollen production, and for pollen development and germination. The polypeptide is Protein GAMETE CELL DEFECTIVE 1, mitochondrial (Oryza sativa subsp. japonica (Rice)).